A 571-amino-acid polypeptide reads, in one-letter code: Proline--tRNA ligase (571 aa).

Belongs to the class-II aminoacyl-tRNA synthetase family. ProS type 1 subfamily. As to quaternary structure, homodimer.

It localises to the cytoplasm. It carries out the reaction tRNA(Pro) + L-proline + ATP = L-prolyl-tRNA(Pro) + AMP + diphosphate. Its function is as follows. Catalyzes the attachment of proline to tRNA(Pro) in a two-step reaction: proline is first activated by ATP to form Pro-AMP and then transferred to the acceptor end of tRNA(Pro). As ProRS can inadvertently accommodate and process non-cognate amino acids such as alanine and cysteine, to avoid such errors it has two additional distinct editing activities against alanine. One activity is designated as 'pretransfer' editing and involves the tRNA(Pro)-independent hydrolysis of activated Ala-AMP. The other activity is designated 'posttransfer' editing and involves deacylation of mischarged Ala-tRNA(Pro). The misacylated Cys-tRNA(Pro) is not edited by ProRS. The protein is Proline--tRNA ligase of Pseudomonas entomophila (strain L48).